The primary structure comprises 163 residues: Lipoprotein signal peptidase (163 aa).

4 helical membrane passes run 9-29, 42-62, 67-87, and 93-113; these read AWPWLWFSVLVILLDQLSKYL, ILPFLNFTLNYNTGAAFSFLG, WQIIFFAAISFVVSIFLILWL, and SEIMMSLGLSLIIGGALGNFI. Residues aspartate 123 and aspartate 141 contribute to the active site. Residues 137 to 157 traverse the membrane as a helical segment; the sequence is FNVADSAICVGVFLLIVHMLL.

The protein belongs to the peptidase A8 family.

It localises to the cell inner membrane. It catalyses the reaction Release of signal peptides from bacterial membrane prolipoproteins. Hydrolyzes -Xaa-Yaa-Zaa-|-(S,diacylglyceryl)Cys-, in which Xaa is hydrophobic (preferably Leu), and Yaa (Ala or Ser) and Zaa (Gly or Ala) have small, neutral side chains.. The protein operates within protein modification; lipoprotein biosynthesis (signal peptide cleavage). In terms of biological role, this protein specifically catalyzes the removal of signal peptides from prolipoproteins. This Coxiella burnetii (strain RSA 331 / Henzerling II) protein is Lipoprotein signal peptidase.